The primary structure comprises 248 residues: Small ribosomal subunit protein uS2 (248 aa).

The protein belongs to the universal ribosomal protein uS2 family.

The protein is Small ribosomal subunit protein uS2 of Alkalilimnicola ehrlichii (strain ATCC BAA-1101 / DSM 17681 / MLHE-1).